A 140-amino-acid polypeptide reads, in one-letter code: uncharacterized protein (140 aa).

Asn27 carries N-linked (GlcNAc...) asparagine glycosylation. Helical transmembrane passes span 45–65 (FSLY…GVYA), 76–96 (VWIF…TGTV), and 116–136 (VPLC…YSMV).

The protein belongs to the TMEM170 family.

It is found in the membrane. This is an uncharacterized protein from Saccharomyces cerevisiae (strain ATCC 204508 / S288c) (Baker's yeast).